Consider the following 502-residue polypeptide: ATP synthase subunit alpha (502 aa).

An ATP-binding site is contributed by 169 to 176 (GDRQTGKT).

The protein belongs to the ATPase alpha/beta chains family. F-type ATPases have 2 components, CF(1) - the catalytic core - and CF(0) - the membrane proton channel. CF(1) has five subunits: alpha(3), beta(3), gamma(1), delta(1), epsilon(1). CF(0) has three main subunits: a(1), b(2) and c(9-12). The alpha and beta chains form an alternating ring which encloses part of the gamma chain. CF(1) is attached to CF(0) by a central stalk formed by the gamma and epsilon chains, while a peripheral stalk is formed by the delta and b chains.

The protein localises to the cell inner membrane. It catalyses the reaction ATP + H2O + 4 H(+)(in) = ADP + phosphate + 5 H(+)(out). In terms of biological role, produces ATP from ADP in the presence of a proton gradient across the membrane. The alpha chain is a regulatory subunit. This chain is ATP synthase subunit alpha, found in Nitratidesulfovibrio vulgaris (strain ATCC 29579 / DSM 644 / CCUG 34227 / NCIMB 8303 / VKM B-1760 / Hildenborough) (Desulfovibrio vulgaris).